A 428-amino-acid polypeptide reads, in one-letter code: Hercynine oxygenase (428 aa).

A Fe cation-binding site is contributed by histidine 46. Gamma-L-glutamyl-L-cysteine is bound at residue 82 to 85 (RASR). 2 residues coordinate Fe cation: histidine 129 and histidine 133. Gamma-L-glutamyl-L-cysteine is bound by residues aspartate 411 and arginine 415.

This sequence belongs to the EgtB family. Monomer. Fe(2+) is required as a cofactor.

The enzyme catalyses gamma-L-glutamyl-L-cysteine + hercynine + O2 = gamma-L-glutamyl-hercynylcysteine S-oxide + H2O. Its pathway is amino-acid biosynthesis; ergothioneine biosynthesis. Catalyzes the oxidative sulfurization of hercynine (N-alpha,N-alpha,N-alpha-trimethyl-L-histidine) into hercynyl-gamma-L-glutamyl-L-cysteine sulfoxide, a step in the biosynthesis pathway of ergothioneine. Cannot use the alternative thiols cysteine, N-acetylcysteine, or glutathione instead of gamma-glutamylcysteine as substrates, and histidine is a poor sulfur acceptor substrate compared to hercynine. The sequence is that of Hercynine oxygenase from Mycolicibacterium smegmatis (strain ATCC 700084 / mc(2)155) (Mycobacterium smegmatis).